Here is a 435-residue protein sequence, read N- to C-terminus: Acetylcholine receptor-like protein cup-4 (435 aa).

The signal sequence occupies residues 1-24 (MRLLLIFTVIFVFYLAILKRDVNA). N-linked (GlcNAc...) asparagine glycans are attached at residues Asn-41, Asn-68, Asn-237, and Asn-249. Transmembrane regions (helical) follow at residues 298-318 (VSFF…AIYL) and 341-361 (ITLF…HGVL). Asn-403 is a glycosylation site (N-linked (GlcNAc...) asparagine). Residues 413–433 (PLAGLAMFVYFVIMFILYLVV) traverse the membrane as a helical segment.

It belongs to the ligand-gated ion channel (TC 1.A.9) family. Acetylcholine receptor (TC 1.A.9.1) subfamily.

It localises to the cytoplasmic vesicle membrane. Functionally, thought to regulate endocytosis in coelomocytes through modulation of phospholipase C activity. Possible acetylcholine receptor. In Caenorhabditis briggsae, this protein is Acetylcholine receptor-like protein cup-4.